Reading from the N-terminus, the 573-residue chain is FACT complex subunit pob3 (573 aa).

Disordered regions lie at residues 153 to 174 and 485 to 573; these read SDGDANAQPSGSTKNRGRKAAA and LDND…KIGK. A compositionally biased stretch (acidic residues) spans 486–495; that stretch reads DNDDMMSSDE. Over residues 496–505 the composition is skewed to basic and acidic residues; sequence DGGRADRGSA. Acidic residues-rich tracts occupy residues 506–530 and 541–562; these read DEDEESVDEDFQAESESDVAEEFDS and AEMDDASDAGDDEEDVDMSEEE.

It belongs to the SSRP1 family. In terms of assembly, forms a stable heterodimer with spt16. The spt16-pob3 dimer weakly associates with multiple molecules of nhp6 to form the FACT complex.

Its subcellular location is the nucleus. The protein resides in the chromosome. Component of the FACT complex, a general chromatin factor that acts to reorganize nucleosomes. The FACT complex is involved in multiple processes that require DNA as a template such as mRNA elongation, DNA replication and DNA repair. During transcription elongation the FACT complex acts as a histone chaperone that both destabilizes and restores nucleosomal structure. It facilitates the passage of RNA polymerase II and transcription by promoting the dissociation of one histone H2A-H2B dimer from the nucleosome, then subsequently promotes the reestablishment of the nucleosome following the passage of RNA polymerase II. The polypeptide is FACT complex subunit pob3 (pob3) (Aspergillus fumigatus (strain ATCC MYA-4609 / CBS 101355 / FGSC A1100 / Af293) (Neosartorya fumigata)).